Reading from the N-terminus, the 663-residue chain is 4-hydroxy-3-methylbut-2-en-1-yl diphosphate synthase (flavodoxin) (663 aa).

[4Fe-4S] cluster is bound by residues Cys568, Cys571, Cys602, and Glu609.

It belongs to the IspG family. [4Fe-4S] cluster serves as cofactor.

The enzyme catalyses (2E)-4-hydroxy-3-methylbut-2-enyl diphosphate + oxidized [flavodoxin] + H2O + 2 H(+) = 2-C-methyl-D-erythritol 2,4-cyclic diphosphate + reduced [flavodoxin]. The protein operates within isoprenoid biosynthesis; isopentenyl diphosphate biosynthesis via DXP pathway; isopentenyl diphosphate from 1-deoxy-D-xylulose 5-phosphate: step 5/6. Functionally, converts 2C-methyl-D-erythritol 2,4-cyclodiphosphate (ME-2,4cPP) into 1-hydroxy-2-methyl-2-(E)-butenyl 4-diphosphate. This chain is 4-hydroxy-3-methylbut-2-en-1-yl diphosphate synthase (flavodoxin), found in Leptospira borgpetersenii serovar Hardjo-bovis (strain JB197).